The primary structure comprises 158 residues: Pyruvoyl-dependent arginine decarboxylase (158 aa).

Residue S44 is modified to Pyruvic acid (Ser).

This sequence belongs to the PdaD family. Pyruvate is required as a cofactor.

It catalyses the reaction L-arginine + H(+) = agmatine + CO2. In Pyrococcus horikoshii (strain ATCC 700860 / DSM 12428 / JCM 9974 / NBRC 100139 / OT-3), this protein is Pyruvoyl-dependent arginine decarboxylase.